The chain runs to 911 residues: DNA ligase 4 (911 aa).

ATP contacts are provided by Glu-271, Thr-272, Lys-273, Leu-274, Arg-278, Glu-331, Lys-345, Phe-367, Glu-427, Lys-432, Lys-449, and Lys-451. Lys-273 acts as the N6-AMP-lysine intermediate in catalysis. Glu-331 serves as a coordination point for Mg(2+). Residue Glu-427 coordinates Mg(2+). The segment at 610-620 (LASKHFYVGGD) is required for catalytic activity. 2 consecutive BRCT domains span residues 654-743 (KISN…PHFM) and 808-911 (SPLS…QYLI).

It belongs to the ATP-dependent DNA ligase family. In terms of assembly, interacts with XRCC4; the LIG4-XRCC4 subcomplex has a 1:2 stoichiometry and XRCC4 is required for LIG4 stability. Component of the core long-range non-homologous end joining (NHEJ) complex (also named DNA-PK complex) composed of PRKDC, LIG4, XRCC4, XRCC6/Ku70, XRCC5/Ku86 and NHEJ1/XLF. Additional component of the NHEJ complex includes PAXX. Following autophosphorylation, PRKDC dissociates from DNA, leading to formation of the short-range NHEJ complex, composed of LIG4, XRCC4, XRCC6/Ku70, XRCC5/Ku86 and NHEJ1/XLF. Interacts with DCLRE1C; the interaction is direct. Interacts with APLF. It depends on Mg(2+) as a cofactor.

The protein localises to the nucleus. It carries out the reaction ATP + (deoxyribonucleotide)n-3'-hydroxyl + 5'-phospho-(deoxyribonucleotide)m = (deoxyribonucleotide)n+m + AMP + diphosphate.. In terms of biological role, DNA ligase involved in DNA non-homologous end joining (NHEJ); required for double-strand break (DSB) repair and V(D)J recombination. Catalyzes the NHEJ ligation step of the broken DNA during DSB repair by resealing the DNA breaks after the gap filling is completed. Joins single-strand breaks in a double-stranded polydeoxynucleotide in an ATP-dependent reaction. LIG4 is mechanistically flexible: it can ligate nicks as well as compatible DNA overhangs alone, while in the presence of XRCC4, it can ligate ends with 2-nucleotides (nt) microhomology and 1-nt gaps. Forms a subcomplex with XRCC4; the LIG4-XRCC4 subcomplex is responsible for the NHEJ ligation step and XRCC4 enhances the joining activity of LIG4. Binding of the LIG4-XRCC4 complex to DNA ends is dependent on the assembly of the DNA-dependent protein kinase complex DNA-PK to these DNA ends. LIG4 regulates nuclear localization of XRCC4. The sequence is that of DNA ligase 4 from Pongo abelii (Sumatran orangutan).